The primary structure comprises 3083 residues: Laminin subunit alpha-1 (3083 aa).

A signal peptide spans 1 to 24; it reads MRGSGTGAALLVLLASVLWVTVRS. Position 25 is a pyrrolidone carboxylic acid (Q25). A Laminin N-terminal domain is found at 25–276; the sequence is QQRGLFPAIL…SIKDISVGGM (252 aa). 6 cysteine pairs are disulfide-bonded: C277/C286, C279/C297, C299/C308, C311/C331, C334/C343, and C336/C368. 4 consecutive Laminin EGF-like domains span residues 277–333, 334–403, 404–460, and 461–509; these read CICY…ECEE, CNCH…PCRP, CNCD…NCIP, and CDCR…GCSE. N370 carries N-linked (GlcNAc...) asparagine glycosylation. 10 disulfides stabilise this stretch: C371/C380, C383/C401, C404/C416, C406/C434, C436/C445, C448/C458, C461/C474, C463/C478, C480/C489, and C492/C507. Positions 510–519 constitute a Laminin EGF-like 5; first part domain; sequence CFCFGVSGVC. A Laminin IV type A 1 domain is found at 523 to 715; the sequence is TWSISQVTNM…DLAVAADVEH (193 aa). N-linked (GlcNAc...) asparagine glycosylation is present at N672. Positions 716–748 constitute a Laminin EGF-like 5; second part domain; the sequence is CECPQGYTGTSCEACLPGYYRVDGILFGGICQP. 32 disulfides stabilise this stretch: C749–C758, C751–C764, C767–C776, C779–C795, C798–C813, C800–C823, C826–C835, C838–C853, C856–C870, C858–C877, C880–C889, C892–C906, C909–C921, C911–C928, C930–C939, C942–C955, C958–C970, C960–C976, C978–C987, C990–C1002, C1005–C1014, C1007–C1021, C1023–C1032, C1035–C1048, C1051–C1063, C1053–C1070, C1072–C1081, C1084–C1094, C1097–C1109, C1099–C1125, C1127–C1136, and C1139–C1154. Laminin EGF-like domains lie at 749-797, 798-855, 856-908, 909-957, 958-1004, 1005-1050, 1051-1096, and 1097-1156; these read CECH…DCQP, CACP…TCVP, CNCS…NCRA, CDCH…GCVP, CNCS…GCTP, CDCA…GCQA, CNCS…DCVP, and CGCD…GCSP. Positions 1147-1149 match the Cell attachment site motif; sequence RGD. Residues 1157–1166 form the Laminin EGF-like 14; first part domain; sequence CFCFGLSQLC. The 192-residue stretch at 1177 to 1368 folds into the Laminin IV type A 2 domain; it reads ITLASDQPLL…EGEAALLLEL (192 aa). N-linked (GlcNAc...) asparagine glycosylation is present at N1344. The 41-residue stretch at 1369 to 1409 folds into the Laminin EGF-like 14; second part domain; it reads CVCPPGTAGHSCQDCAPGYYREKLPESGGRGPRPLLAPCVP. Cystine bridges form between C1410/C1419, C1412/C1426, C1429/C1438, C1441/C1456, C1459/C1473, C1461/C1483, C1486/C1495, C1498/C1513, C1516/C1528, C1518/C1535, C1537/C1546, and C1549/C1560. 3 Laminin EGF-like domains span residues 1410–1458, 1459–1515, and 1516–1562; these read CNCN…DCTP, CTCP…SCQT, and CDCN…DCVS. Positions 1564 to 2123 are domain II and I; the sequence is DDDCVGPLLN…SRARKQVASI (560 aa). Residues 1617–1691 are a coiled coil; the sequence is AKKIRAEIQL…VATLNQTARK (75 aa). N1659, N1686, N1718, N1725, N1763, and N1811 each carry an N-linked (GlcNAc...) asparagine glycan. Positions 1723 to 1809 form a coiled coil; sequence QQNATLELKA…QEKKLRVQEE (87 aa). Positions 1868-1901 form a coiled coil; sequence KRRARDLVHRAEQHASELQSRAGALDRDLENVRN. N1935, N2026, N2045, and N2066 each carry an N-linked (GlcNAc...) asparagine glycan. 5 Laminin G-like domains span residues 2124-2304, 2312-2488, 2493-2679, 2721-2893, and 2898-3078; these read KVAV…CNGC, DSSF…RKGC, IQSV…LDTC, AHQF…VDRC, and QEGT…PHSC. Residues C2278 and C2304 are joined by a disulfide bond. The N-linked (GlcNAc...) asparagine glycan is linked to N2355. 2 disulfide bridges follow: C2464/C2488 and C2652/C2679. A glycan (N-linked (GlcNAc...) asparagine) is linked at N2834. A disulfide bond links C2868 and C2893. N2923 carries an N-linked (GlcNAc...) asparagine glycan. An intrachain disulfide couples C3047 to C3078.

As to quaternary structure, laminin is a complex glycoprotein, consisting of three different polypeptide chains (alpha, beta, gamma), which are bound to each other by disulfide bonds into a cross-shaped molecule comprising one long and three short arms with globules at each end. Alpha-1 is a subunit of laminin-1 (laminin-111 or EHS laminin) and laminin-3 (laminin-121 or S-laminin). In terms of processing, tyrosine phosphorylated by PKDCC/VLK.

It is found in the secreted. Its subcellular location is the extracellular space. It localises to the extracellular matrix. The protein resides in the basement membrane. In terms of biological role, binding to cells via a high affinity receptor, laminin is thought to mediate the attachment, migration and organization of cells into tissues during embryonic development by interacting with other extracellular matrix components. The protein is Laminin subunit alpha-1 (Lama1) of Mus musculus (Mouse).